Consider the following 102-residue polypeptide: Large ribosomal subunit protein bL21 (102 aa).

It belongs to the bacterial ribosomal protein bL21 family. In terms of assembly, part of the 50S ribosomal subunit. Contacts protein L20.

In terms of biological role, this protein binds to 23S rRNA in the presence of protein L20. The protein is Large ribosomal subunit protein bL21 of Geobacillus sp. (strain WCH70).